Consider the following 610-residue polypeptide: UvrABC system protein C (610 aa).

The GIY-YIG domain maps to 16 to 94; it reads SQPGVYRMYD…IKLYQPRYNV (79 aa). The 36-residue stretch at 204–239 folds into the UVR domain; that stretch reads DQVLNQLVARMEQASGDLRFEEAGRLRDQIQAVRRV.

The protein belongs to the UvrC family. Interacts with UvrB in an incision complex.

It localises to the cytoplasm. The UvrABC repair system catalyzes the recognition and processing of DNA lesions. UvrC both incises the 5' and 3' sides of the lesion. The N-terminal half is responsible for the 3' incision and the C-terminal half is responsible for the 5' incision. The chain is UvrABC system protein C from Erwinia tasmaniensis (strain DSM 17950 / CFBP 7177 / CIP 109463 / NCPPB 4357 / Et1/99).